The primary structure comprises 231 residues: 2-C-methyl-D-erythritol 4-phosphate cytidylyltransferase (231 aa).

This sequence belongs to the IspD/TarI cytidylyltransferase family. IspD subfamily.

It carries out the reaction 2-C-methyl-D-erythritol 4-phosphate + CTP + H(+) = 4-CDP-2-C-methyl-D-erythritol + diphosphate. It participates in isoprenoid biosynthesis; isopentenyl diphosphate biosynthesis via DXP pathway; isopentenyl diphosphate from 1-deoxy-D-xylulose 5-phosphate: step 2/6. Its function is as follows. Catalyzes the formation of 4-diphosphocytidyl-2-C-methyl-D-erythritol from CTP and 2-C-methyl-D-erythritol 4-phosphate (MEP). The protein is 2-C-methyl-D-erythritol 4-phosphate cytidylyltransferase of Xylella fastidiosa (strain M23).